The chain runs to 562 residues: Nicotinate phosphoribosyltransferase (562 aa).

Residues Tyr-36, Phe-183, and Thr-225 each contribute to the nicotinate site. His-228 is modified (phosphohistidine). A 5-phospho-alpha-D-ribose 1-diphosphate-binding site is contributed by Thr-397.

This sequence belongs to the NAPRTase family. It depends on Mg(2+) as a cofactor. Mn(2+) serves as cofactor. Post-translationally, transiently phosphorylated on a His residue during the reaction cycle. Phosphorylation strongly increases the affinity for substrates and increases the rate of nicotinate D-ribonucleotide production. Dephosphorylation regenerates the low-affinity form of the enzyme, leading to product release.

It carries out the reaction nicotinate + 5-phospho-alpha-D-ribose 1-diphosphate + ATP + H2O = nicotinate beta-D-ribonucleotide + ADP + phosphate + diphosphate. The protein operates within cofactor biosynthesis; NAD(+) biosynthesis; nicotinate D-ribonucleotide from nicotinate: step 1/1. In terms of biological role, catalyzes the first step in the biosynthesis of NAD from nicotinic acid, the ATP-dependent synthesis of beta-nicotinate D-ribonucleotide from nicotinate and 5-phospho-D-ribose 1-phosphate. Helps prevent cellular oxidative stress via its role in NAD biosynthesis. This is Nicotinate phosphoribosyltransferase from Caenorhabditis elegans.